Reading from the N-terminus, the 124-residue chain is Anamorsin homolog (124 aa).

A compositionally biased stretch (polar residues) spans 1–20 (MSSPAPSTSHNAANSTQAFS). Disordered regions lie at residues 1–39 (MSSP…EDRE) and 40–124 (AKST…TDDI). Residues cysteine 49, cysteine 56, cysteine 59, and cysteine 61 each coordinate [2Fe-2S] cluster. A fe-S binding site A region spans residues 49–61 (CATRRRACKNCTC). Residues cysteine 86, cysteine 89, cysteine 97, and cysteine 100 each coordinate [4Fe-4S] cluster. Short sequence motifs (cx2C motif) lie at residues 86-89 (CGNC) and 97-100 (CAGC). The interval 86 to 100 (CGNCAKGDAFRCAGC) is fe-S binding site B.

It belongs to the anamorsin family. As to quaternary structure, monomer. The cofactor is [2Fe-2S] cluster. [4Fe-4S] cluster serves as cofactor.

The protein localises to the cytoplasm. The protein resides in the mitochondrion intermembrane space. In terms of biological role, component of the cytosolic iron-sulfur (Fe-S) protein assembly (CIA) machinery. Required for the maturation of extramitochondrial Fe-S proteins. Part of an electron transfer chain functioning in an early step of cytosolic Fe-S biogenesis, facilitating the de novo assembly of a [4Fe-4S] cluster on the cytosolic Fe-S scaffold complex. Electrons are transferred from NADPH via a FAD- and FMN-containing diflavin oxidoreductase. Together with the diflavin oxidoreductase, also required for the assembly of the diferric tyrosyl radical cofactor of ribonucleotide reductase (RNR), probably by providing electrons for reduction during radical cofactor maturation in the catalytic small subunit. The polypeptide is Anamorsin homolog (Trypanosoma brucei brucei (strain 927/4 GUTat10.1)).